The following is a 340-amino-acid chain: Methane monooxygenase component C (340 aa).

A 2Fe-2S ferredoxin-type domain is found at 1-92 (MYQIVIETED…DLHLLVPYTY (92 aa)). Residues Cys-37, Cys-41, Cys-44, and Cys-76 each coordinate [2Fe-2S] cluster. The 105-residue stretch at 101–205 (QTNWLAEILA…RGPAGSFFLH (105 aa)) folds into the FAD-binding FR-type domain. Residue 215–229 (VAGGTGLSPVLSMIR) coordinates FAD.

The soluble methane monooxygenase (sMMO) consists of four components A/MMOH (composed of alpha/MmoX, beta/MmoY and gamma/MmoZ), B/MMOB (MmoB), C/MMOR (MmoC) and D/MMOD (MmoD). It depends on [2Fe-2S] cluster as a cofactor.

It carries out the reaction methane + NADH + O2 + H(+) = methanol + NAD(+) + H2O. The enzyme catalyses methane + NADPH + O2 + H(+) = methanol + NADP(+) + H2O. Its function is as follows. Responsible for the initial oxygenation of methane to methanol in methanotrophs. It also catalyzes the monohydroxylation of a variety of unactivated alkenes, alicyclic, aromatic and heterocyclic compounds. The component C is the iron-sulfur flavoprotein of sMMO. The protein is Methane monooxygenase component C (mmoC) of Methylosinus trichosporium.